Reading from the N-terminus, the 838-residue chain is Probable inorganic carbon transporter subunit DabA (838 aa).

Residues cysteine 353, aspartate 355, histidine 537, and cysteine 552 each contribute to the Zn(2+) site.

The protein belongs to the inorganic carbon transporter (TC 9.A.2) DabA family. In terms of assembly, forms a complex with DabB. The cofactor is Zn(2+).

The protein localises to the cell membrane. Functionally, part of an energy-coupled inorganic carbon pump. In Roseiflexus sp. (strain RS-1), this protein is Probable inorganic carbon transporter subunit DabA.